The following is a 360-amino-acid chain: Phospho-N-acetylmuramoyl-pentapeptide-transferase (360 aa).

Transmembrane regions (helical) follow at residues 21–41, 73–93, 94–114, 132–152, 168–188, 199–219, 239–259, 263–283, 288–308, and 338–358; these read YITV…LWIG, TMGG…WANL, ANPY…IGFV, WKYF…YWLG, IMPQ…VGTG, GLAI…AWAT, VVVF…FNTY, VFMG…VAIL, FLLV…ILQV, and VIIR…VTLK.

Belongs to the glycosyltransferase 4 family. MraY subfamily. Mg(2+) is required as a cofactor.

It localises to the cell inner membrane. It carries out the reaction UDP-N-acetyl-alpha-D-muramoyl-L-alanyl-gamma-D-glutamyl-meso-2,6-diaminopimeloyl-D-alanyl-D-alanine + di-trans,octa-cis-undecaprenyl phosphate = di-trans,octa-cis-undecaprenyl diphospho-N-acetyl-alpha-D-muramoyl-L-alanyl-D-glutamyl-meso-2,6-diaminopimeloyl-D-alanyl-D-alanine + UMP. It participates in cell wall biogenesis; peptidoglycan biosynthesis. In terms of biological role, catalyzes the initial step of the lipid cycle reactions in the biosynthesis of the cell wall peptidoglycan: transfers peptidoglycan precursor phospho-MurNAc-pentapeptide from UDP-MurNAc-pentapeptide onto the lipid carrier undecaprenyl phosphate, yielding undecaprenyl-pyrophosphoryl-MurNAc-pentapeptide, known as lipid I. This Haemophilus influenzae (strain PittEE) protein is Phospho-N-acetylmuramoyl-pentapeptide-transferase.